The chain runs to 322 residues: NADH-quinone oxidoreductase subunit H (322 aa).

The next 9 membrane-spanning stretches (helical) occupy residues 15 to 35 (FFKV…LSIV), 50 to 69 (NRVG…KILF), 81 to 101 (FIFV…IPII), 114 to 134 (IGIL…LFAG), 149 to 169 (ACVQ…GVVA), 186 to 206 (IWNV…GLAV), 237 to 257 (FFIG…TLFF), 265 to 285 (IPGC…FILI), and 302 to 322 (WKFC…LILV).

The protein belongs to the complex I subunit 1 family. NDH-1 is composed of 13 different subunits. Subunits NuoA, H, J, K, L, M, N constitute the membrane sector of the complex.

Its subcellular location is the cell membrane. The enzyme catalyses a quinone + NADH + 5 H(+)(in) = a quinol + NAD(+) + 4 H(+)(out). Functionally, NDH-1 shuttles electrons from NADH, via FMN and iron-sulfur (Fe-S) centers, to quinones in the respiratory chain. The immediate electron acceptor for the enzyme in this species is believed to be ubiquinone. Couples the redox reaction to proton translocation (for every two electrons transferred, four hydrogen ions are translocated across the cytoplasmic membrane), and thus conserves the redox energy in a proton gradient. This subunit may bind ubiquinone. The sequence is that of NADH-quinone oxidoreductase subunit H from Buchnera aphidicola subsp. Acyrthosiphon pisum (strain 5A).